The chain runs to 289 residues: MFFEIALIGTTASGKTYIANTLAREFNAVVLSLDSLCVYKEINIASAKPSQDDLASIKYFGVNLLSVNEHFNVELFIREYQKAKEFALARNLPLIIVGGTGFYLKTMIDGLSEKTLESKSSLNNDEIYALLLNIDPNYKIEKNDTYRLKKWLGIYEQTREIPSEFLKRTQKTGVLKDIEIYELAWDKEILKKRIKTRTKEMLDNGLLDEAKILFSKFDHKLKALNSIGLKECKEYLDGEISFKELENLITIHTTQLAKRQRTFNKKFQSKALEFDKALATLRMKFSIEK.

Residue 9 to 16 (GTTASGKT) coordinates ATP. 11 to 16 (TASGKT) serves as a coordination point for substrate. The interval 34 to 37 (DSLC) is interaction with substrate tRNA.

Belongs to the IPP transferase family. In terms of assembly, monomer. The cofactor is Mg(2+).

The enzyme catalyses adenosine(37) in tRNA + dimethylallyl diphosphate = N(6)-dimethylallyladenosine(37) in tRNA + diphosphate. Catalyzes the transfer of a dimethylallyl group onto the adenine at position 37 in tRNAs that read codons beginning with uridine, leading to the formation of N6-(dimethylallyl)adenosine (i(6)A). This chain is tRNA dimethylallyltransferase, found in Campylobacter jejuni (strain RM1221).